Consider the following 605-residue polypeptide: Elongation factor 4 (605 aa).

The 184-residue stretch at 9–192 (SRTRNFCIIA…AIIARIPSPK (184 aa)) folds into the tr-type G domain. Residues 21–26 (DHGKST) and 139–142 (NKID) each bind GTP.

It belongs to the TRAFAC class translation factor GTPase superfamily. Classic translation factor GTPase family. LepA subfamily.

It is found in the cell inner membrane. It carries out the reaction GTP + H2O = GDP + phosphate + H(+). Its function is as follows. Required for accurate and efficient protein synthesis under certain stress conditions. May act as a fidelity factor of the translation reaction, by catalyzing a one-codon backward translocation of tRNAs on improperly translocated ribosomes. Back-translocation proceeds from a post-translocation (POST) complex to a pre-translocation (PRE) complex, thus giving elongation factor G a second chance to translocate the tRNAs correctly. Binds to ribosomes in a GTP-dependent manner. The chain is Elongation factor 4 from Chlorobium limicola (strain DSM 245 / NBRC 103803 / 6330).